The following is a 197-amino-acid chain: Probable low-affinity putrescine importer PlaP (197 aa).

A run of 5 helical transmembrane segments spans residues 33 to 53, 85 to 105, 107 to 127, 140 to 160, and 163 to 183; these read GVLI…HAGV, VLLV…TATA, INLG…SQFW, FNYL…WINL, and SSMV…ACVT.

The protein belongs to the amino acid-polyamine-organocation (APC) superfamily.

It localises to the cell inner membrane. It carries out the reaction putrescine(in) + H(+)(in) = putrescine(out) + H(+)(out). Its function is as follows. Putrescine importer. In Klebsiella pneumoniae, this protein is Probable low-affinity putrescine importer PlaP (plaP).